A 178-amino-acid chain; its full sequence is Transcription factor E (178 aa).

Residues 5–89 (AEELILSLAK…YWKVNIDQIN (85 aa)) form the HTH TFE/IIEalpha-type domain.

Belongs to the TFE family. As to quaternary structure, monomer. Interaction with RNA polymerase subunits RpoF and RpoE is necessary for Tfe stimulatory transcription activity. Able to interact with Tbp and RNA polymerase in the absence of DNA promoter. Interacts both with the preinitiation and elongation complexes.

Transcription factor that plays a role in the activation of archaeal genes transcribed by RNA polymerase. Facilitates transcription initiation by enhancing TATA-box recognition by TATA-box-binding protein (Tbp), and transcription factor B (Tfb) and RNA polymerase recruitment. Not absolutely required for transcription in vitro, but particularly important in cases where Tbp or Tfb function is not optimal. It dynamically alters the nucleic acid-binding properties of RNA polymerases by stabilizing the initiation complex and destabilizing elongation complexes. Seems to translocate with the RNA polymerase following initiation and acts by binding to the non template strand of the transcription bubble in elongation complexes. This Sulfurisphaera tokodaii (strain DSM 16993 / JCM 10545 / NBRC 100140 / 7) (Sulfolobus tokodaii) protein is Transcription factor E.